We begin with the raw amino-acid sequence, 424 residues long: MGEVKPAKVENYSTGTDANTLFVDGERVLCFHGPLIYEAKVLKTKPDATPVEYYIHYAGWSKNWDEWVPENRVLKYNDDNVKRRQELARQCGERSKKDNKKGSAKAKKMEQMRNESRASTPSKDSNTSQSTASSTPTTSAGPGSKSEAGSTGTTTTNSTANSTTSRAHRKSTQSTPSTARPGTPSDKKEDPAAAETTEEEGPVAPKKKRMSEQRPSLTGSDVAEKPLPPTTTPSTPTTEPAPCVESEEAYAAKVEVKIKIPDELKHYLTDDWYAVVREHKLLELPAKVTVQQISEQYLAHKKSVKSTSASKEVAINDVLDGIVEYFNVMLGSQLLYKFERTQYADVMQKHPDTPLSELYGSFHLLRLFVRLGSMLSYSALDQQSMQNLLTHVQDFLKFLVKNSSIFFSMSNFINVDPEYVRNAQ.

The Tudor-knot domain maps to Val-23–Val-73. The segment at Ala-88–Cys-243 is disordered. Residues Lys-97–Ala-106 show a composition bias toward basic residues. Over residues Lys-107–Ser-116 the composition is skewed to basic and acidic residues. Position 119 is a phosphoserine (Ser-119). The segment covering Ser-122 to Ser-165 has biased composition (low complexity). 4 positions are modified to phosphothreonine: Thr-175, Thr-183, Thr-196, and Thr-197. The residue at position 211 (Ser-211) is a Phosphoserine. Residues Thr-232–Pro-242 show a composition bias toward low complexity. Thr-235 carries the phosphothreonine modification. Positions Ala-252 to Gln-424 constitute an MRG domain.

As to quaternary structure, component of the Tip60 chromatin-remodeling complex which contains the catalytic subunit Tip60 and the subunits Domino, Tra1, Brd8, E(Pc), DMAP1, Pontin, Reptin, Ing3, Act87E, BAP55, Mrg15, MrgBP, Gas41 and YL-1.

Its subcellular location is the nucleus. Its function is as follows. Part of the Tip60 chromatin-remodeling complex which is involved in DNA repair. Upon induction of DNA double-strand breaks, this complex acetylates phosphorylated H2AV in nucleosomes and exchanges it with unmodified H2AV. The protein is NuA4 complex subunit EAF3 homolog (MRG15) of Drosophila melanogaster (Fruit fly).